A 95-amino-acid polypeptide reads, in one-letter code: Aspartyl/glutamyl-tRNA(Asn/Gln) amidotransferase subunit C (95 aa).

This sequence belongs to the GatC family. Heterotrimer of A, B and C subunits.

It carries out the reaction L-glutamyl-tRNA(Gln) + L-glutamine + ATP + H2O = L-glutaminyl-tRNA(Gln) + L-glutamate + ADP + phosphate + H(+). It catalyses the reaction L-aspartyl-tRNA(Asn) + L-glutamine + ATP + H2O = L-asparaginyl-tRNA(Asn) + L-glutamate + ADP + phosphate + 2 H(+). Functionally, allows the formation of correctly charged Asn-tRNA(Asn) or Gln-tRNA(Gln) through the transamidation of misacylated Asp-tRNA(Asn) or Glu-tRNA(Gln) in organisms which lack either or both of asparaginyl-tRNA or glutaminyl-tRNA synthetases. The reaction takes place in the presence of glutamine and ATP through an activated phospho-Asp-tRNA(Asn) or phospho-Glu-tRNA(Gln). The chain is Aspartyl/glutamyl-tRNA(Asn/Gln) amidotransferase subunit C from Brucella melitensis biotype 2 (strain ATCC 23457).